We begin with the raw amino-acid sequence, 1050 residues long: Valine--tRNA ligase (1050 aa).

A compositionally biased stretch (basic and acidic residues) spans 37–57; the sequence is EKKAAASDKPVKEAKAKKEQT. The tract at residues 37–72 is disordered; the sequence is EKKAAASDKPVKEAKAKKEQTVEAAEPVDQTPTGQR. Positions 127–137 match the 'HIGH' region motif; the sequence is PNVTGNLHVGH. The short motif at 642–646 is the 'KMSKS' region element; sequence KMSKS. Lys-645 provides a ligand contact to ATP.

Belongs to the class-I aminoacyl-tRNA synthetase family.

It catalyses the reaction tRNA(Val) + L-valine + ATP = L-valyl-tRNA(Val) + AMP + diphosphate. The polypeptide is Valine--tRNA ligase (Caenorhabditis elegans).